Reading from the N-terminus, the 346-residue chain is Dihydroorotase (346 aa).

Zn(2+) is bound by residues His-14 and His-16. Residues 16 to 18 and Asn-42 contribute to the substrate site; that span reads HLR. 3 residues coordinate Zn(2+): Lys-100, His-137, and His-175. Position 100 is an N6-carboxylysine (Lys-100). Residue His-137 participates in substrate binding. Leu-220 is a substrate binding site. Asp-248 lines the Zn(2+) pocket. The active site involves Asp-248. His-252 and Ala-264 together coordinate substrate.

The protein belongs to the metallo-dependent hydrolases superfamily. DHOase family. Class II DHOase subfamily. As to quaternary structure, homodimer. Requires Zn(2+) as cofactor.

The enzyme catalyses (S)-dihydroorotate + H2O = N-carbamoyl-L-aspartate + H(+). It functions in the pathway pyrimidine metabolism; UMP biosynthesis via de novo pathway; (S)-dihydroorotate from bicarbonate: step 3/3. Functionally, catalyzes the reversible cyclization of carbamoyl aspartate to dihydroorotate. The protein is Dihydroorotase of Ruegeria pomeroyi (strain ATCC 700808 / DSM 15171 / DSS-3) (Silicibacter pomeroyi).